The chain runs to 283 residues: Acetyl-coenzyme A carboxylase carboxyl transferase subunit beta (283 aa).

The region spanning 29–283 (LWISCPKCQQ…VKIHSMKGAF (255 aa)) is the CoA carboxyltransferase N-terminal domain. Zn(2+) contacts are provided by Cys-33, Cys-36, Cys-51, and Cys-54. The C4-type zinc-finger motif lies at 33–54 (CPKCQQSIYHKDLGKYKTCPNC).

This sequence belongs to the AccD/PCCB family. As to quaternary structure, acetyl-CoA carboxylase is a heterohexamer composed of biotin carboxyl carrier protein (AccB), biotin carboxylase (AccC) and two subunits each of ACCase subunit alpha (AccA) and ACCase subunit beta (AccD). The cofactor is Zn(2+).

It is found in the cytoplasm. It catalyses the reaction N(6)-carboxybiotinyl-L-lysyl-[protein] + acetyl-CoA = N(6)-biotinyl-L-lysyl-[protein] + malonyl-CoA. Its pathway is lipid metabolism; malonyl-CoA biosynthesis; malonyl-CoA from acetyl-CoA: step 1/1. In terms of biological role, component of the acetyl coenzyme A carboxylase (ACC) complex. Biotin carboxylase (BC) catalyzes the carboxylation of biotin on its carrier protein (BCCP) and then the CO(2) group is transferred by the transcarboxylase to acetyl-CoA to form malonyl-CoA. This chain is Acetyl-coenzyme A carboxylase carboxyl transferase subunit beta, found in Ligilactobacillus salivarius (strain UCC118) (Lactobacillus salivarius).